Consider the following 814-residue polypeptide: DNA ligase (814 aa).

Residues 46-50 (DAEYD), 95-96 (SL), and Glu-129 each bind NAD(+). Lys-131 (N6-AMP-lysine intermediate) is an active-site residue. NAD(+) is bound by residues Arg-152, Glu-189, Lys-305, and Lys-329. The Zn(2+) site is built by Cys-434, Cys-437, Cys-458, and Cys-464. Residues 526–549 (SAQRRTEGEPAPKKPTKKKGEEED) form a disordered region. One can recognise a BRCT domain in the interval 735 to 814 (TSAAAFAGKT…DDWLAMLAEA (80 aa)).

It belongs to the NAD-dependent DNA ligase family. LigA subfamily. Requires Mg(2+) as cofactor. Mn(2+) is required as a cofactor.

It catalyses the reaction NAD(+) + (deoxyribonucleotide)n-3'-hydroxyl + 5'-phospho-(deoxyribonucleotide)m = (deoxyribonucleotide)n+m + AMP + beta-nicotinamide D-nucleotide.. Functionally, DNA ligase that catalyzes the formation of phosphodiester linkages between 5'-phosphoryl and 3'-hydroxyl groups in double-stranded DNA using NAD as a coenzyme and as the energy source for the reaction. It is essential for DNA replication and repair of damaged DNA. This Methylorubrum extorquens (strain CM4 / NCIMB 13688) (Methylobacterium extorquens) protein is DNA ligase.